Consider the following 688-residue polypeptide: T-box transcription factor TBX2-A (688 aa).

Residues 104–277 (LWDQFHKIGT…NNPFAKGFRD (174 aa)) constitute a DNA-binding region (T-box). Disordered stretches follow at residues 301–436 (CKAD…GSLS) and 606–688 (PSTN…ETPK). Composition is skewed to basic and acidic residues over residues 340 to 361 (NNREEKFGADSDQELDRREIRS), 378 to 403 (RLEDRGKDKSTPEKKSDSPESRKDGS), and 412 to 430 (SLEKDKAESRRKEDSKSDP). The span at 621-636 (PGSESSKPGSSRESSP) shows a compositional bias: low complexity. The stretch at 655-679 (ASMKDSINELQNIQRLVSGLESQRE) forms a coiled coil. Residues 676–688 (SQREISPGRETPK) are compositionally biased toward basic and acidic residues.

As to quaternary structure, binds DNA as a monomer.

It is found in the nucleus. In terms of biological role, transcription factor which acts as a transcriptional repressor. May also function as a transcriptional activator. Binds to the palindromic T site 5'-TTCACACCTAGGTGTGAA-3' DNA sequence, or a half-site, which are present in the regulatory region of several genes. This Xenopus laevis (African clawed frog) protein is T-box transcription factor TBX2-A (tbx2-a).